We begin with the raw amino-acid sequence, 838 residues long: Semaphorin-4G (838 aa).

The signal sequence occupies residues 1–17 (MWGRLWPLLLSILTATA). At 18-675 (VPGPSLRRPS…GAQLAPDVRL (658 aa)) the chain is on the extracellular side. One can recognise a Sema domain in the interval 35–505 (RMTIPYEELS…APSGVIQLPL (471 aa)). Residues asparagine 55, asparagine 111, and asparagine 126 are each glycosylated (N-linked (GlcNAc...) asparagine). Cysteines 104 and 115 form a disulfide. Cystine bridges form between cysteine 133–cysteine 142, cysteine 270–cysteine 377, and cysteine 294–cysteine 337. N-linked (GlcNAc...) asparagine glycosylation occurs at asparagine 388. The 52-residue stretch at 507-558 (SCSRYRSCYDCILARDPYCGWDPGTHACAAATTIANRTALIQDIERGNRGCE) folds into the PSI domain. 2 disulfide bridges follow: cysteine 508-cysteine 525 and cysteine 517-cysteine 534. Asparagine 542 and asparagine 598 each carry an N-linked (GlcNAc...) asparagine glycan. Positions 567–649 (PPLKTRSVLR…RTLLASYSLT (83 aa)) constitute an Ig-like C2-type domain. A disulfide bridge connects residues cysteine 584 and cysteine 632. A helical membrane pass occupies residues 676 to 696 (LYVLAIAALGGLCLILASSLL). Over 697 to 838 (YVACLREGRR…LVEQLDESSV (142 aa)) the chain is Cytoplasmic. The tract at residues 723–777 (SAVQLQTVSGQCPGEEDEGDDEGAGGLEGSCLQIIPGEGAPAPPPPPPPPPPAEL) is disordered. The span at 736 to 745 (GEEDEGDDEG) shows a compositional bias: acidic residues. A compositionally biased stretch (pro residues) spans 763–775 (PAPPPPPPPPPPA). Phosphoserine occurs at positions 795 and 837.

It belongs to the semaphorin family. As to quaternary structure, interacts with PLXNB2.

Its subcellular location is the cell membrane. In terms of biological role, cell surface receptor for PLXNB2. May play a role in axon guidance. The protein is Semaphorin-4G (SEMA4G) of Homo sapiens (Human).